The sequence spans 315 residues: Phosphatidylglycerol--prolipoprotein diacylglyceryl transferase (315 aa).

A run of 2 helical transmembrane segments spans residues 19–39 and 93–113; these read FTIH…VWIL and VWEG…VAFL. Arg141 provides a ligand contact to a 1,2-diacyl-sn-glycero-3-phospho-(1'-sn-glycerol). The next 2 membrane-spanning stretches (helical) occupy residues 188-208 and 256-276; these read LFHP…ALII and VWTA…LYQY.

Belongs to the Lgt family.

The protein localises to the cell membrane. It carries out the reaction L-cysteinyl-[prolipoprotein] + a 1,2-diacyl-sn-glycero-3-phospho-(1'-sn-glycerol) = an S-1,2-diacyl-sn-glyceryl-L-cysteinyl-[prolipoprotein] + sn-glycerol 1-phosphate + H(+). The protein operates within protein modification; lipoprotein biosynthesis (diacylglyceryl transfer). Its function is as follows. Catalyzes the transfer of the diacylglyceryl group from phosphatidylglycerol to the sulfhydryl group of the N-terminal cysteine of a prolipoprotein, the first step in the formation of mature lipoproteins. The protein is Phosphatidylglycerol--prolipoprotein diacylglyceryl transferase of Bifidobacterium longum (strain NCC 2705).